The following is a 120-amino-acid chain: Jacalin-related lectin 39 (120 aa).

The region spanning 6–120 is the Jacalin-type lectin domain; sequence SRDHADFVAH…KRTFDFGGFN (115 aa).

This sequence belongs to the jacalin lectin family.

This Arabidopsis thaliana (Mouse-ear cress) protein is Jacalin-related lectin 39 (JAL39).